Reading from the N-terminus, the 425-residue chain is Orexin/Hypocretin receptor type 1 (425 aa).

The tract at residues 1–25 (MEPSATPGPQMGVPTEGRERSPEPP) is disordered. Residues 1 to 46 (MEPSATPGPQMGVPTEGRERSPEPPDYEDEFLRYLWRDYLYPKQYE) lie on the Extracellular side of the membrane. Residues 26–41 (DYEDEFLRYLWRDYLY) form a required for response to orexin-A region. The helical transmembrane segment at 47–67 (WVLIAAYVAVFFVALVGNTLV) threads the bilayer. The Cytoplasmic portion of the chain corresponds to 68-82 (CLAVWRNHHMRTVTN). The chain crosses the membrane as a helical span at residues 83–105 (YFIVNLSLADVLVTAICLPASLL). The Extracellular segment spans residues 106–119 (VDITESWLFGHALC). Cys-119 and Cys-202 form a disulfide bridge. The helical transmembrane segment at 120-140 (KVIPYLQAVSVSVAVLTLSFI) threads the bilayer. Over 141–160 (ALDRWYAICHPLLFKSTARR) the chain is Cytoplasmic. Residues 161–182 (ARGSILGIWAVSLAVMVPQAAV) traverse the membrane as a helical segment. Over 183–213 (MECSSVLPELANRTRLFSVCDERWADDLYPK) the chain is Extracellular. A glycan (N-linked (GlcNAc...) asparagine) is linked at Asn-194. Residues 214–235 (IYHSCFFIVTYLAPLGLMAMAY) traverse the membrane as a helical segment. Topologically, residues 236-298 (FQIFRKLWGR…QMRARRKTAK (63 aa)) are cytoplasmic. The helical transmembrane segment at 299-321 (MLMVVLLVFALCYLPISVLNVLK) threads the bilayer. Residues 322–336 (RVFGMFRQASDREAV) lie on the Extracellular side of the membrane. Residues 337-360 (YACFTFSHWLVYANSAANPIIYNF) traverse the membrane as a helical segment. The Cytoplasmic segment spans residues 361–425 (LSGKFREQFK…LLTSVTTVLP (65 aa)).

It belongs to the G-protein coupled receptor 1 family.

It is found in the cell membrane. Functionally, moderately selective excitatory receptor for orexin-A and, with a lower affinity, for orexin-B neuropeptide. Triggers an increase in cytoplasmic Ca(2+) levels in response to orexin-A binding. The polypeptide is Orexin/Hypocretin receptor type 1 (Bos taurus (Bovine)).